Here is a 220-residue protein sequence, read N- to C-terminus: Probable GTP-binding protein EngB (220 aa).

Residues 26-200 form the EngB-type G domain; that stretch reads EGIEIAFAGR…RAKLDEWYAP (175 aa). GTP contacts are provided by residues 34 to 41, 61 to 65, 79 to 82, 146 to 149, and 179 to 181; these read GRSNTGKS, GRTQL, DLPG, TKAD, and FSS. Residues serine 41 and threonine 63 each coordinate Mg(2+).

The protein belongs to the TRAFAC class TrmE-Era-EngA-EngB-Septin-like GTPase superfamily. EngB GTPase family. It depends on Mg(2+) as a cofactor.

Necessary for normal cell division and for the maintenance of normal septation. This Vibrio cholerae serotype O1 (strain ATCC 39541 / Classical Ogawa 395 / O395) protein is Probable GTP-binding protein EngB.